The following is a 119-amino-acid chain: Large ribosomal subunit protein uL18 (119 aa).

This sequence belongs to the universal ribosomal protein uL18 family. As to quaternary structure, part of the 50S ribosomal subunit; part of the 5S rRNA/L5/L18/L25 subcomplex. Contacts the 5S and 23S rRNAs.

This is one of the proteins that bind and probably mediate the attachment of the 5S RNA into the large ribosomal subunit, where it forms part of the central protuberance. This Paracoccus denitrificans (strain Pd 1222) protein is Large ribosomal subunit protein uL18.